Consider the following 408-residue polypeptide: MHLYKPACADIPSPKLGLPKSSESALKCRRHLAVTKPPPQAACWPARPSGAAERKFLEKFLRVHGISLQETTRAETGMAYRNLGKSGLRVSCLGLGTWVTFGGQISDEVAERLMTIAYESGVNLFDTAEVYAAGKAEVILGSIIKKKGWRRSSLVITTKLYWGGKAETERGLSRKHIIEGLKGSLQRLQLEYVDVVFANRPDSNTPMEEIVRAMTHVINQGMAMYWGTSRWSAMEIMEAYSVARQFNMIPPVCEQAEYHLFQREKVEVQLPELYHKIGVGAMTWSPLACGIISGKYGNGVPESSRASLKCYQWLKERIVSEEGRKQQNKLKDLSPIAERLGCTLPQLAVAWCLRNEGVSSVLLGSSTPEQLIENLGAIQVLPKMTSHVVNEIDNILRNKPYSKKDYRS.

NADP(+)-binding residues include T97, W98, Q104, and D126. The Proton donor/acceptor role is filled by Y131. NADP(+) contacts are provided by N199, S229, R230, Q255, W284, S285, P286, L287, A288, C289, K295, R305, G364, S366, Q370, E373, and N374.

Belongs to the shaker potassium channel beta subunit family. In terms of assembly, homotetramer. Interaction with tetrameric potassium channel alpha subunits gives rise to a heterooctamer. Identified in potassium channel complexes containing KCNA1, KCNA2, KCNA4, KCNA5, KCNA6, KCNAB1 and KCNAB2. Part of a complex containing KCNA1, KCNA4 and LGI1; interaction with LGI1 inhibits down-regulation of KCNA1 channel activity. Interacts with the dimer formed by GNB1 and GNG2; this enhances KCNA1 binding. Interacts with SQSTM1. Expression most abundant in aorta. Also high in left ventricle. Also detected in right ventricle, atrium, brain, skeletal muscle and kidney. Not detected in liver.

Its subcellular location is the cytoplasm. It localises to the membrane. It is found in the cell membrane. It catalyses the reaction a primary alcohol + NADP(+) = an aldehyde + NADPH + H(+). The enzyme catalyses a secondary alcohol + NADP(+) = a ketone + NADPH + H(+). In terms of biological role, regulatory subunit of the voltage-gated potassium (Kv) Shaker channels composed of pore-forming and potassium-conducting alpha subunits and of regulatory beta subunits. The beta-1/KCNAB1 cytoplasmic subunit mediates closure of delayed rectifier potassium channels by physically obstructing the pore via its N-terminal domain and increases the speed of channel closure for other family members. Promotes the inactivation of Kv1.1/KCNA1, Kv1.2/KCNA2, Kv1.4/KCNA4, Kv1.5/KCNA5 and Kv1.6/KCNA6 alpha subunit-containing channels. Displays nicotinamide adenine dinucleotide phosphate (NADPH)-dependent aldoketoreductase activity by catalyzing the NADPH-dependent reduction of a variety of endogenous aldehydes and ketones. The binding of NADPH is required for efficient down-regulation of potassium channel activity. Oxidation of the bound NADPH restrains N-terminal domain from blocking the channel, thereby decreasing N-type inactivation of potassium channel activity. The chain is Voltage-gated potassium channel subunit beta-1 (KCNAB1) from Mustela putorius (European polecat).